A 51-amino-acid polypeptide reads, in one-letter code: Protein YrhD (51 aa).

The polypeptide is Protein YrhD (yrhD) (Escherichia coli (strain K12)).